Reading from the N-terminus, the 66-residue chain is Large ribosomal subunit protein bL35 (66 aa).

The span at 1–26 (MPKMKTHRGSAKRFKKTASGKLKRGH) shows a compositional bias: basic residues. The disordered stretch occupies residues 1 to 28 (MPKMKTHRGSAKRFKKTASGKLKRGHAY).

It belongs to the bacterial ribosomal protein bL35 family.

This chain is Large ribosomal subunit protein bL35, found in Geobacillus thermodenitrificans (strain NG80-2).